The sequence spans 400 residues: MQREKIAIAYSGGLDTSIMIKWLKDKYDADIVAVTGNLGQQKEIENLESKAIATGASGFHFVDLKKPFVEDYIWRALKAGALYEDVYPLATALGRPLLAKALVDVALEENCTMLAHGCTGKGNDQVRFEVTFASLAPHLKVLAPLREWEFTSRESEMDYAIKHNIPVSATKKSPYSIDENIWGISIECGVLEDPMVAPPEDAYQITTSPENAPNEATVVEIEFEQGVPVSVDGKKMAGLDIINRLNELGAKNGIGRLDMIENRVVGIKSREIYEAPAATILHFAHRELERLTLEKTVFQYKKNIAQDYANIIYNGTWFSPMRTALDAFVDDTQKPVTGMVRLKLFKGSVTLLGRQSPYSLYNESLATYTEADSFDHKAAAGFIQIYGLGLKTFSEVHPAK.

Position 9 to 17 (9 to 17 (AYSGGLDTS)) interacts with ATP. Position 87 (Tyr87) interacts with L-citrulline. Position 117 (Gly117) interacts with ATP. L-aspartate contacts are provided by Thr119, Asn123, and Asp124. Residue Asn123 coordinates L-citrulline. The L-citrulline site is built by Arg127, Ser176, Ser185, Glu261, and Tyr273.

The protein belongs to the argininosuccinate synthase family. Type 1 subfamily. In terms of assembly, homotetramer.

It is found in the cytoplasm. The catalysed reaction is L-citrulline + L-aspartate + ATP = 2-(N(omega)-L-arginino)succinate + AMP + diphosphate + H(+). Its pathway is amino-acid biosynthesis; L-arginine biosynthesis; L-arginine from L-ornithine and carbamoyl phosphate: step 2/3. The sequence is that of Argininosuccinate synthase from Chlorobium luteolum (strain DSM 273 / BCRC 81028 / 2530) (Pelodictyon luteolum).